The sequence spans 646 residues: Envelope glycoprotein (646 aa).

A signal peptide spans 1-25 (MLSVAQSSALFLLQAICILYITKLT). Topologically, residues 26-119 (IPTPVSEINL…INYLLRFISA (94 aa)) are lumenal. N-linked (GlcNAc...) asparagine; by host glycans are attached at residues Asn72, Asn80, and Asn101. A helical membrane pass occupies residues 120–140 (IIVYLLLSISKQGIFLFFSIV). Over 141 to 176 (HYSFKFIKNKKSCNICGNDFYFIHIDCPKPDFTKRS) the chain is Cytoplasmic. The helical transmembrane segment at 177-197 (DFHMMFYIILFLSLFFVVTHA) threads the bilayer. At 198–588 (DDNVYNYYEH…KNLLYIDYKK (391 aa)) the chain is on the lumenal side. Residues Asn247 and Asn336 are each glycosylated (N-linked (GlcNAc...) asparagine; by host). A helical membrane pass occupies residues 589-609 (IIFVFLVAIISIGIFLRSPYM). The Cytoplasmic segment spans residues 610-646 (LLSSILKFRKRRKVVATNRSEQLVMDDDVDVFIGPPS).

In terms of assembly, G2 and G1 interact with each other. Post-translationally, specific enzymatic cleavages in vivo yield mature proteins including glycoprotein G1 and glycoprotein G2. Glycosylated. Glycosylation is essential for proper subcellular location.

The protein resides in the virion membrane. It localises to the host Golgi apparatus membrane. Functionally, glycoprotein G2 and glycoprotein G1 interact with each other and are present at the surface of the virion. They are able to attach the virion to a cell receptor and to promote fusion of membranes after endocytosis of the virion. The chain is Envelope glycoprotein from European mountain ash ringspot-associated virus (isolate Sorbus aucuparia) (EMARAV).